We begin with the raw amino-acid sequence, 211 residues long: Redox-sensing transcriptional repressor Rex (211 aa).

Residues 17–56 (LYYRFVSSLKSKGIDRVNSKAISDALQIDSATIRRDFSYF) constitute a DNA-binding region (H-T-H motif). 91–96 (GVGNLG) provides a ligand contact to NAD(+).

Belongs to the transcriptional regulatory Rex family. Homodimer.

It is found in the cytoplasm. In terms of biological role, modulates transcription in response to changes in cellular NADH/NAD(+) redox state. The sequence is that of Redox-sensing transcriptional repressor Rex from Staphylococcus aureus (strain Mu3 / ATCC 700698).